A 209-amino-acid chain; its full sequence is Probable GTP-binding protein EngB (209 aa).

The region spanning 12–203 (VSFEIIFVGR…RDRLHEMKRD (192 aa)) is the EngB-type G domain. GTP is bound by residues 20–27 (GRSNVGKS), 45–49 (GVTLR), 62–65 (DMPG), 142–145 (NKMD), and 179–181 (ISA). 2 residues coordinate Mg(2+): Ser27 and Thr47.

This sequence belongs to the TRAFAC class TrmE-Era-EngA-EngB-Septin-like GTPase superfamily. EngB GTPase family. It depends on Mg(2+) as a cofactor.

Necessary for normal cell division and for the maintenance of normal septation. The polypeptide is Probable GTP-binding protein EngB (Methanosarcina barkeri (strain Fusaro / DSM 804)).